The primary structure comprises 487 residues: uncharacterized protein (487 aa).

The chain crosses the membrane as a helical span at residues 7 to 28 (HVISIFETLGAYFINIFYNFLY). N-linked (GlcNAc...) asparagine; by host glycosylation is found at Asn-73, Asn-83, and Asn-195. Residues 196 to 235 (RSLLHQIEELTSEKKSLLADLSTLRKKYEKRQSEYRRLVQ) adopt a coiled-coil conformation. Residues 294–305 (TSQELTSKSPNN) are compositionally biased toward polar residues. The disordered stretch occupies residues 294–324 (TSQELTSKSPNNYPVPHSRTIVSKPSDNYPV). An N-linked (GlcNAc...) asparagine; by host glycan is attached at Asn-462.

The protein belongs to the asfivirus B475L family.

It localises to the host membrane. This is an uncharacterized protein from African swine fever virus (isolate Tick/South Africa/Pretoriuskop Pr4/1996) (ASFV).